Here is a 195-residue protein sequence, read N- to C-terminus: Dephospho-CoA kinase (195 aa).

Residues 4 to 195 (IIGLTGGIAS…EQILDALQRL (192 aa)) enclose the DPCK domain. Residue 12–17 (ASGKST) coordinates ATP.

It belongs to the CoaE family.

The protein localises to the cytoplasm. It carries out the reaction 3'-dephospho-CoA + ATP = ADP + CoA + H(+). It participates in cofactor biosynthesis; coenzyme A biosynthesis; CoA from (R)-pantothenate: step 5/5. Catalyzes the phosphorylation of the 3'-hydroxyl group of dephosphocoenzyme A to form coenzyme A. The protein is Dephospho-CoA kinase of Streptococcus agalactiae serotype Ia (strain ATCC 27591 / A909 / CDC SS700).